Here is an 835-residue protein sequence, read N- to C-terminus: Leucine--tRNA ligase (835 aa).

The 'HIGH' region motif lies at 41–52 (PYPSGQGLHVGH). Positions 611 to 615 (KMSKS) match the 'KMSKS' region motif. Lysine 614 contributes to the ATP binding site.

This sequence belongs to the class-I aminoacyl-tRNA synthetase family.

It is found in the cytoplasm. It carries out the reaction tRNA(Leu) + L-leucine + ATP = L-leucyl-tRNA(Leu) + AMP + diphosphate. The chain is Leucine--tRNA ligase from Elusimicrobium minutum (strain Pei191).